Reading from the N-terminus, the 278-residue chain is Tropomyosin A (278 aa).

The stretch at 1–270 (IMMAMKLEKE…YRAISGELDT (270 aa)) forms a coiled coil. Positions 92–134 (DFEQSSGRLTETSTKLDDASKAAEESERNRKTLETRSISDDER) are disordered. The segment covering 95 to 104 (QSSGRLTETS) has biased composition (polar residues). The segment covering 105-134 (TKLDDASKAAEESERNRKTLETRSISDDER) has biased composition (basic and acidic residues).

This sequence belongs to the tropomyosin family. Homodimer.

In terms of biological role, tropomyosin, in association with the troponin complex, plays a central role in the calcium dependent regulation of muscle contraction. This Echinococcus granulosus (Hydatid tapeworm) protein is Tropomyosin A.